We begin with the raw amino-acid sequence, 84 residues long: Toxin Cll9 (84 aa).

An N-terminal signal peptide occupies residues 1–19; it reads MNSLLMITACLILIGTVWA. The region spanning 20–83 is the LCN-type CS-alpha/beta domain; that stretch reads EDGYLFDKRK…ISRTPGKTCK (64 aa). Intrachain disulfides connect Cys31–Cys82, Cys35–Cys58, Cys44–Cys63, and Cys48–Cys65.

As to expression, expressed by the venom gland.

It is found in the secreted. Beta toxins bind voltage-independently at site-4 of sodium channels (Nav) and shift the voltage of activation toward more negative potentials thereby affecting sodium channel activation and promoting spontaneous and repetitive firing. Has some action on peripheral ganglia, but not on other sodium channels such as those from cerebellum granular cells in culture. Induces sleep, suggesting a strong antiepileptic action. The chain is Toxin Cll9 from Centruroides limpidus (Mexican scorpion).